Consider the following 492-residue polypeptide: NADH-quinone oxidoreductase subunit N 2 (492 aa).

The next 14 membrane-spanning stretches (helical) occupy residues 16 to 36, 44 to 64, 87 to 107, 118 to 138, 140 to 160, 175 to 195, 216 to 236, 250 to 270, 282 to 302, 309 to 329, 333 to 353, 381 to 401, 416 to 438, and 455 to 475; these read ILPE…DALI, PLGY…ACQA, FSLF…LVSF, GEYY…TSAT, LVLI…LAAM, FLLG…IFGA, PIIY…VAAA, PSPI…AVLL, FWIV…GALV, LLAY…AAAK, ISAA…AFAV, AAIL…GGFF, VWLT…RIIV, and PFGL…LGVL.

This sequence belongs to the complex I subunit 2 family. NDH-1 is composed of 14 different subunits. Subunits NuoA, H, J, K, L, M, N constitute the membrane sector of the complex.

It is found in the cell inner membrane. The enzyme catalyses a quinone + NADH + 5 H(+)(in) = a quinol + NAD(+) + 4 H(+)(out). In terms of biological role, NDH-1 shuttles electrons from NADH, via FMN and iron-sulfur (Fe-S) centers, to quinones in the respiratory chain. The immediate electron acceptor for the enzyme in this species is believed to be ubiquinone. Couples the redox reaction to proton translocation (for every two electrons transferred, four hydrogen ions are translocated across the cytoplasmic membrane), and thus conserves the redox energy in a proton gradient. The chain is NADH-quinone oxidoreductase subunit N 2 from Koribacter versatilis (strain Ellin345).